Consider the following 291-residue polypeptide: N-acetylmannosamine kinase (291 aa).

ATP contacts are provided by residues 5–12 (AIDIGGTK) and 132–139 (GVGGGVVS). Residues histidine 156, cysteine 166, cysteine 168, and cysteine 173 each contribute to the Zn(2+) site.

Belongs to the ROK (NagC/XylR) family. NanK subfamily. Homodimer.

It carries out the reaction an N-acyl-D-mannosamine + ATP = an N-acyl-D-mannosamine 6-phosphate + ADP + H(+). The protein operates within amino-sugar metabolism; N-acetylneuraminate degradation; D-fructose 6-phosphate from N-acetylneuraminate: step 2/5. Its function is as follows. Catalyzes the phosphorylation of N-acetylmannosamine (ManNAc) to ManNAc-6-P. The polypeptide is N-acetylmannosamine kinase (Escherichia coli O127:H6 (strain E2348/69 / EPEC)).